The sequence spans 363 residues: tRNA N6-adenosine threonylcarbamoyltransferase (363 aa).

Fe cation-binding residues include histidine 121 and histidine 125. Residues 143 to 147 (LASGG), aspartate 176, glycine 189, and asparagine 287 contribute to the substrate site. Aspartate 315 contributes to the Fe cation binding site.

Belongs to the KAE1 / TsaD family. Fe(2+) serves as cofactor.

Its subcellular location is the cytoplasm. The catalysed reaction is L-threonylcarbamoyladenylate + adenosine(37) in tRNA = N(6)-L-threonylcarbamoyladenosine(37) in tRNA + AMP + H(+). In terms of biological role, required for the formation of a threonylcarbamoyl group on adenosine at position 37 (t(6)A37) in tRNAs that read codons beginning with adenine. Is involved in the transfer of the threonylcarbamoyl moiety of threonylcarbamoyl-AMP (TC-AMP) to the N6 group of A37, together with TsaE and TsaB. TsaD likely plays a direct catalytic role in this reaction. The polypeptide is tRNA N6-adenosine threonylcarbamoyltransferase (Rhodopseudomonas palustris (strain BisA53)).